An 85-amino-acid polypeptide reads, in one-letter code: Beta-insect depressant toxin Lqh-dprIT3h (85 aa).

Residues 1 to 21 (MKLLLLLTISASMLIEGLVNA) form the signal peptide. The LCN-type CS-alpha/beta domain maps to 22-82 (DGYIRGGDGC…EWDYETDTCG (61 aa)). Cystine bridges form between Cys31–Cys81, Cys35–Cys56, Cys42–Cys63, and Cys46–Cys65. Gly82 carries the post-translational modification Glycine amide.

The protein belongs to the long (4 C-C) scorpion toxin superfamily. Sodium channel inhibitor family. Beta subfamily. Expressed by the venom gland.

It localises to the secreted. Its function is as follows. Depressant insect beta-toxins cause a transient contraction paralysis followed by a slow flaccid paralysis. They bind voltage-independently at site-4 of sodium channels (Nav) and block action potentials, primarily by depolarizing the axonal membrane and suppressing the sodium current. This depressant toxin is active only on insects. It is found in a relatively small amount in the venom. This Leiurus hebraeus (Hebrew deathstalker scorpion) protein is Beta-insect depressant toxin Lqh-dprIT3h.